A 199-amino-acid polypeptide reads, in one-letter code: NAD(P)H dehydrogenase (quinone) (199 aa).

A Flavodoxin-like domain is found at 4 to 190 (VLVLYYSAYG…AGARYQGRMI (187 aa)). FMN contacts are provided by residues 10–15 (SAYGHI) and 78–80 (TRF). Tyr12 contributes to the NAD(+) binding site. Trp98 is a binding site for substrate. FMN-binding positions include 113–119 (SSATQHG) and His134.

Belongs to the WrbA family. Requires FMN as cofactor.

It catalyses the reaction a quinone + NADH + H(+) = a quinol + NAD(+). The catalysed reaction is a quinone + NADPH + H(+) = a quinol + NADP(+). In Nitrobacter winogradskyi (strain ATCC 25391 / DSM 10237 / CIP 104748 / NCIMB 11846 / Nb-255), this protein is NAD(P)H dehydrogenase (quinone).